The primary structure comprises 331 residues: tRNA N6-adenosine threonylcarbamoyltransferase (331 aa).

Residues histidine 107 and histidine 111 each coordinate Fe cation. Substrate is bound by residues 129 to 133, aspartate 162, glycine 175, and asparagine 269; that span reads LVSGG. Residue aspartate 297 participates in Fe cation binding.

The protein belongs to the KAE1 / TsaD family. Requires Fe(2+) as cofactor.

The protein localises to the cytoplasm. The enzyme catalyses L-threonylcarbamoyladenylate + adenosine(37) in tRNA = N(6)-L-threonylcarbamoyladenosine(37) in tRNA + AMP + H(+). Required for the formation of a threonylcarbamoyl group on adenosine at position 37 (t(6)A37) in tRNAs that read codons beginning with adenine. Is involved in the transfer of the threonylcarbamoyl moiety of threonylcarbamoyl-AMP (TC-AMP) to the N6 group of A37, together with TsaE and TsaB. TsaD likely plays a direct catalytic role in this reaction. In Wolinella succinogenes (strain ATCC 29543 / DSM 1740 / CCUG 13145 / JCM 31913 / LMG 7466 / NCTC 11488 / FDC 602W) (Vibrio succinogenes), this protein is tRNA N6-adenosine threonylcarbamoyltransferase.